The following is a 219-amino-acid chain: Ribose-5-phosphate isomerase A (219 aa).

Substrate contacts are provided by residues 28 to 31 (TGST), 81 to 84 (DGAD), and 94 to 97 (KGGG). Glu103 acts as the Proton acceptor in catalysis. Lys121 serves as a coordination point for substrate.

It belongs to the ribose 5-phosphate isomerase family. In terms of assembly, homodimer.

It carries out the reaction aldehydo-D-ribose 5-phosphate = D-ribulose 5-phosphate. Its pathway is carbohydrate degradation; pentose phosphate pathway; D-ribose 5-phosphate from D-ribulose 5-phosphate (non-oxidative stage): step 1/1. Its function is as follows. Catalyzes the reversible conversion of ribose-5-phosphate to ribulose 5-phosphate. The sequence is that of Ribose-5-phosphate isomerase A from Salmonella arizonae (strain ATCC BAA-731 / CDC346-86 / RSK2980).